Reading from the N-terminus, the 369-residue chain is Histidinol-phosphate aminotransferase (369 aa).

N6-(pyridoxal phosphate)lysine is present on K223.

It belongs to the class-II pyridoxal-phosphate-dependent aminotransferase family. Histidinol-phosphate aminotransferase subfamily. Homodimer. Pyridoxal 5'-phosphate is required as a cofactor.

It carries out the reaction L-histidinol phosphate + 2-oxoglutarate = 3-(imidazol-4-yl)-2-oxopropyl phosphate + L-glutamate. It functions in the pathway amino-acid biosynthesis; L-histidine biosynthesis; L-histidine from 5-phospho-alpha-D-ribose 1-diphosphate: step 7/9. In Shouchella clausii (strain KSM-K16) (Alkalihalobacillus clausii), this protein is Histidinol-phosphate aminotransferase.